A 344-amino-acid chain; its full sequence is DNA integrity scanning protein DisA (344 aa).

Residues 1 to 133 (MALLAPGTPI…GRRYLIERPE (133 aa)) enclose the DAC domain. Residues Gly-61 and 92 to 96 (TRHRT) each bind ATP.

It belongs to the DisA family. In terms of assembly, homooctamer. Mg(2+) is required as a cofactor.

It carries out the reaction 2 ATP = 3',3'-c-di-AMP + 2 diphosphate. Functionally, participates in a DNA-damage check-point. DisA forms globular foci that rapidly scan along the chromosomes searching for lesions. Its function is as follows. Also has diadenylate cyclase activity, catalyzing the condensation of 2 ATP molecules into cyclic di-AMP (c-di-AMP). c-di-AMP likely acts as a signaling molecule that may couple DNA integrity with a cellular process. In Cutibacterium acnes (strain DSM 16379 / KPA171202) (Propionibacterium acnes), this protein is DNA integrity scanning protein DisA.